A 492-amino-acid polypeptide reads, in one-letter code: Catalase isozyme 3 (492 aa).

Active-site residues include H65 and N138. Y347 is a binding site for heme.

Belongs to the catalase family. As to quaternary structure, homotetramer. Heme is required as a cofactor. As to expression, abundant in green cotyledons, etiolated cotyledons, green hypocotyl and root, but not in young leaf.

It is found in the peroxisome. It carries out the reaction 2 H2O2 = O2 + 2 H2O. Its function is as follows. Occurs in almost all aerobically respiring organisms and serves to protect cells from the toxic effects of hydrogen peroxide. In Cucurbita pepo (Vegetable marrow), this protein is Catalase isozyme 3 (CAT3).